A 352-amino-acid polypeptide reads, in one-letter code: C-C chemokine receptor type 5 (352 aa).

The Extracellular portion of the chain corresponds to 1–30 (MDYQVSSPTYDIDYYTSGPCQKINVKQIAA). The residue at position 3 (Y3) is a Sulfotyrosine. O-linked (GalNAc...) serine glycosylation is found at S6 and S7. Sulfotyrosine occurs at positions 10, 14, and 15. 2 cysteine pairs are disulfide-bonded: C20-C269 and C101-C178. The helical transmembrane segment at 31-58 (RLLPPLYSLVFIFGFVGNMLVILILINC) threads the bilayer. The Cytoplasmic segment spans residues 59–68 (KRLKSMTDIY). A helical membrane pass occupies residues 69 to 89 (LLNLAISDLFFLLTVPFWAHY). The Extracellular segment spans residues 90–102 (AAAQWDFGNTMCQ). The chain crosses the membrane as a helical span at residues 103-124 (LLTGLYFIGFFSGIFFIILLTI). The Cytoplasmic segment spans residues 125–141 (DRYLAIVHAVFALKART). A helical membrane pass occupies residues 142–166 (VTFGVVTSVITWVVAVFASLPGIIF). The Extracellular segment spans residues 167–198 (TRSQKEGLHYTCSSHFPYSQYQFWKNFQTLKI). A helical transmembrane segment spans residues 199–218 (VILGLVLPLLVMVICYSGIL). The Cytoplasmic portion of the chain corresponds to 219 to 235 (KTLLRCRNEKKRHRAVR). A helical transmembrane segment spans residues 236–260 (LIFTIMIVYFLFWAPYNIVLLLNTF). Residues 261 to 277 (QEFFGLNNCSSSNRLDQ) lie on the Extracellular side of the membrane. A helical membrane pass occupies residues 278 to 301 (AMQVTETLGMTHCCINPIIYAFVG). Residues 302 to 352 (EKFRNYLLVFFQKHIAKHFCKCCSIFQQEAPERASSVYTRSTGEQEISVGL) are Cytoplasmic-facing. 3 S-palmitoyl cysteine lipidation sites follow: C321, C323, and C324. A phosphoserine; by BARK1 mark is found at S336, S337, S342, and S349.

The protein belongs to the G-protein coupled receptor 1 family. In terms of assembly, interacts with PRAF2. Efficient ligand binding to CCL3/MIP-1alpha and CCL4/MIP-1beta requires sulfation, O-glycosylation and sialic acid modifications. Glycosylation on Ser-6 is required for efficient binding of CCL4. Interacts with GRK2. Interacts with ARRB1 and ARRB2. Interacts with CNIH4. Interacts with S100A4; this interaction stimulates T-lymphocyte chemotaxis. In terms of processing, sulfated on at least 2 of the N-terminal tyrosines. Sulfation is required for efficient binding of the chemokines, CCL3 and CCL4. Palmitoylation in the C-terminal is important for cell surface expression. Post-translationally, phosphorylation on serine residues in the C-terminal is stimulated by binding CC chemokines especially by APO-RANTES. In terms of processing, O-glycosylated, but not N-glycosylated. Ser-6 appears to be the major site even if Ser-7 may be also O-glycosylated. Also sialylated glycans present which contribute to chemokine binding. Thr-16 and Ser-17 may also be glycosylated and, if so, with small moieties such as a T-antigen.

It is found in the cell membrane. In terms of biological role, receptor for a number of inflammatory CC-chemokines including CCL3/MIP-1-alpha, CCL4/MIP-1-beta and RANTES and subsequently transduces a signal by increasing the intracellular calcium ion level. May play a role in the control of granulocytic lineage proliferation or differentiation. Participates in T-lymphocyte migration to the infection site by acting as a chemotactic receptor. The polypeptide is C-C chemokine receptor type 5 (CCR5) (Hylobates moloch (Silvery gibbon)).